Consider the following 197-residue polypeptide: Recombination protein RecR (197 aa).

The C4-type zinc finger occupies 57 to 72 (CSVCFGITEDDPCRFC). A Toprim domain is found at 79 to 174 (GAICVVEEPQ…RVTRLAHGIP (96 aa)).

Belongs to the RecR family.

May play a role in DNA repair. It seems to be involved in an RecBC-independent recombinational process of DNA repair. It may act with RecF and RecO. The protein is Recombination protein RecR of Geobacter sulfurreducens (strain ATCC 51573 / DSM 12127 / PCA).